We begin with the raw amino-acid sequence, 417 residues long: Serine hydroxymethyltransferase (417 aa).

Residues Leu-121 and 125-127 each bind (6S)-5,6,7,8-tetrahydrofolate; that span reads GHL. Lys-230 is modified (N6-(pyridoxal phosphate)lysine). 355-357 is a (6S)-5,6,7,8-tetrahydrofolate binding site; it reads SPF.

It belongs to the SHMT family. Homodimer. Pyridoxal 5'-phosphate serves as cofactor.

Its subcellular location is the cytoplasm. The enzyme catalyses (6R)-5,10-methylene-5,6,7,8-tetrahydrofolate + glycine + H2O = (6S)-5,6,7,8-tetrahydrofolate + L-serine. It functions in the pathway one-carbon metabolism; tetrahydrofolate interconversion. Its pathway is amino-acid biosynthesis; glycine biosynthesis; glycine from L-serine: step 1/1. Its function is as follows. Catalyzes the reversible interconversion of serine and glycine with tetrahydrofolate (THF) serving as the one-carbon carrier. This reaction serves as the major source of one-carbon groups required for the biosynthesis of purines, thymidylate, methionine, and other important biomolecules. Also exhibits THF-independent aldolase activity toward beta-hydroxyamino acids, producing glycine and aldehydes, via a retro-aldol mechanism. The sequence is that of Serine hydroxymethyltransferase from Marinobacter nauticus (strain ATCC 700491 / DSM 11845 / VT8) (Marinobacter aquaeolei).